The following is a 99-amino-acid chain: Bacterial microcompartment protein homohexamer (99 aa).

The BMC domain maps to 4 to 88 (ALGMIEVRGF…PHVNVDAALP (85 aa)).

Belongs to the bacterial microcompartments protein family. Homohexamer with a small central pore. When purified protein is examined by atomic force microscopy it dynamically makes uniform patches about 35 Angstroms thick with hexamers in the same orientation. In the BMC the concave side faces outward, with the N- and C-terminii exposed to the cytoplasm.

The protein localises to the bacterial microcompartment. The only hexameric shell protein in this bacterium, it forms the majority of the bacterial microcompartment (BMC) shell. Expression of 5 proteins in E.coli (BMC-H (Hoch_5815), BMC-P (Hoch_5814), and 3 BMC-T (Hoch_5812, Hoch_5816, Hoch_3341)) forms a 40 nm artificial BMC with a molecular mass of 6.5 MDa. There are 60 BMC-H hexamers per BMC. The shell facets are 20-30 Angstroms thick (a single hexamer layer), with 1 of BMC-T trimers protruding to the exterior. In Haliangium ochraceum (strain DSM 14365 / JCM 11303 / SMP-2), this protein is Bacterial microcompartment protein homohexamer.